The sequence spans 187 residues: ECF RNA polymerase sigma factor SigK (187 aa).

The segment at 30–96 is sigma-70 factor domain-2; that stretch reads YDHTCTRVYG…RAVDRVRAEQ (67 aa). The Interaction with polymerase core subunit RpoC signature appears at 53–56; it reads ETTQ. The interval 133–182 is sigma-70 factor domain-4; the sequence is CLDGLTDTQRQCIELAYYGGLTYAEVSQRLATNLSTIKSRMRDALRGLRN. The H-T-H motif DNA-binding region spans 155-174; it reads YAEVSQRLATNLSTIKSRMR.

It belongs to the sigma-70 factor family. ECF subfamily. Interacts transiently with the RNA polymerase catalytic core formed by RpoA, RpoB, RpoC and RpoZ (2 alpha, 1 beta, 1 beta' and 1 omega subunit) to form the RNA polymerase holoenzyme that can initiate transcription. Interacts (via sigma-70 factor domain 4) with anti-sigma-K factor RskA.

Functionally, sigma factors are initiation factors that promote the attachment of RNA polymerase to specific initiation sites and are then released. Extracytoplasmic function (ECF) sigma factors are held in an inactive form by an anti-sigma factor until released by regulated intramembrane proteolysis. The protein is ECF RNA polymerase sigma factor SigK (sigK) of Mycobacterium ulcerans (strain Agy99).